A 495-amino-acid polypeptide reads, in one-letter code: Carotenoid 3,4-desaturase (495 aa).

The protein belongs to the carotenoid/retinoid oxidoreductase family.

It carries out the reaction dihydroisopentenyldehydrorhodopin + A = isopentenyldehydrorhodopin + AH2. The enzyme catalyses dihydrobisanhydrobacterioruberin + A = bisanhydrobacterioruberin + AH2. It functions in the pathway carotenoid biosynthesis. Functionally, involved in the biosynthesis of the acyclic C50 carotenoid bacterioruberin (BR). CrtD is involved in the desaturation reactions that form double bonds at C-3,4 of dihydroisopentenyldehydrorhodopin (DH-IDR) and C-3',4' of dihydrobisanhydrobacterioruberin (DH-BABR) to yield isopentenyld ehydrorhodopin (IDR) and bisanhydrobacterioruberin (BABR), respectively. This Haloarcula japonica (strain ATCC 49778 / DSM 6131 / JCM 7785 / NBRC 101032 / NCIMB 13157 / TR-1) protein is Carotenoid 3,4-desaturase.